We begin with the raw amino-acid sequence, 186 residues long: Ribosome-recycling factor (186 aa).

This sequence belongs to the RRF family.

It localises to the cytoplasm. Its function is as follows. Responsible for the release of ribosomes from messenger RNA at the termination of protein biosynthesis. May increase the efficiency of translation by recycling ribosomes from one round of translation to another. The polypeptide is Ribosome-recycling factor (Bacteroides fragilis (strain ATCC 25285 / DSM 2151 / CCUG 4856 / JCM 11019 / LMG 10263 / NCTC 9343 / Onslow / VPI 2553 / EN-2)).